The primary structure comprises 306 residues: Heme A synthase (306 aa).

The Cytoplasmic segment spans residues 1–5 (MKALR). A helical membrane pass occupies residues 6–26 (AVSLANTAVMLLAVLWGAWVT). The Extracellular segment spans residues 27–56 (SSDSGDGCGASWPLCKGTFMPDWDYAAIVE). A disulfide bond links Cys34 and Cys41. Glu56 is a catalytic residue. The chain crosses the membrane as a helical span at residues 57 to 77 (FGHRVVSALAGLLSVAVLVWV). His59 provides a ligand contact to heme o. Over 78–89 (ARVRPSETRLKR) the chain is Cytoplasmic. The helical transmembrane segment at 90–110 (LAFGTFFFVVLQGGLGAAAVL) threads the bilayer. At 111 to 116 (RPQPDL) the chain is on the extracellular side. Residues 117 to 137 (VMALHFGFSLLCFTFALLVTV) traverse the membrane as a helical segment. Residue His121 participates in heme o binding. At 138–164 (ALGQGERAAFQRPDVSAQPVAPGLRTQ) the chain is on the cytoplasmic side. A helical membrane pass occupies residues 165–185 (IWGLAVYTYLVVYLGAYVRHL). Topologically, residues 186–206 (GASMACTGWPLCNGELIPPLY) are extracellular. Residues Cys191 and Cys197 are joined by a disulfide bond. Residues 207-227 (GPVGANFAHRLGAALAVVLVL) traverse the membrane as a helical segment. His215 contributes to the heme b binding site. At 228–247 (RLWWTARRLTERDDLRRGAA) the chain is on the cytoplasmic side. The chain crosses the membrane as a helical span at residues 248 to 268 (WALALMAAQVASGALFPLGYL). Residues 269-277 (NLLTQLLHT) are Extracellular-facing. His276 is a binding site for heme b. Residues 278–298 (GLITGFWGVLSYLCYLTLPVG) traverse the membrane as a helical segment. At 299–306 (RETVAVSA) the chain is on the cytoplasmic side.

This sequence belongs to the COX15/CtaA family. Type 1 subfamily. As to quaternary structure, interacts with CtaB. Requires heme b as cofactor.

Its subcellular location is the cell membrane. It catalyses the reaction Fe(II)-heme o + 2 A + H2O = Fe(II)-heme a + 2 AH2. It participates in porphyrin-containing compound metabolism; heme A biosynthesis; heme A from heme O: step 1/1. In terms of biological role, catalyzes the conversion of heme O to heme A by two successive hydroxylations of the methyl group at C8. The first hydroxylation forms heme I, the second hydroxylation results in an unstable dihydroxymethyl group, which spontaneously dehydrates, resulting in the formyl group of heme A. This Symbiobacterium thermophilum (strain DSM 24528 / JCM 14929 / IAM 14863 / T) protein is Heme A synthase.